An 887-amino-acid chain; its full sequence is Probable alpha/beta-glucosidase agdC (887 aa).

The N-terminal stretch at 1 to 17 (MLRSLLLLAPMVGAAVA) is a signal peptide. N-linked (GlcNAc...) asparagine glycosylation is found at asparagine 171, asparagine 293, and asparagine 373. The active-site Nucleophile is aspartate 422. Residue glutamate 425 is part of the active site. Residues 457 to 483 (PRPLPGFPDDFQPPAASKRSVAKGSKV) form a disordered region. Aspartate 571 serves as the catalytic Proton donor. N-linked (GlcNAc...) asparagine glycans are attached at residues asparagine 747 and asparagine 879.

This sequence belongs to the glycosyl hydrolase 31 family.

The protein resides in the secreted. It catalyses the reaction Hydrolysis of terminal, non-reducing (1-&gt;4)-linked alpha-D-glucose residues with release of alpha-D-glucose.. The catalysed reaction is Hydrolysis of terminal, non-reducing beta-D-glucosyl residues with release of beta-D-glucose.. Its function is as follows. Glucosidase involved in the degradation of cellulosic biomass. Has both alpha- and beta-glucosidase activity. The protein is Probable alpha/beta-glucosidase agdC (agdC) of Aspergillus clavatus (strain ATCC 1007 / CBS 513.65 / DSM 816 / NCTC 3887 / NRRL 1 / QM 1276 / 107).